The sequence spans 814 residues: Transcription activator of gluconeogenesis PADG_03802 (814 aa).

Residues 1 to 90 are disordered; it reads MTSSARNGSP…SAKDPLRPRR (90 aa). Low complexity predominate over residues 69–83; sequence STSSTAASANNASAK. The zn(2)-C6 fungal-type DNA-binding region spans 97–125; the sequence is CFACQRAHLTCGDERPCQRCIKRGLQDTC. 6 disordered regions span residues 164–208, 236–287, 323–384, 442–461, 598–617, and 695–739; these read NTNS…TNNY, SAFQ…PTFF, AGDT…SRNI, PPTNTQHQQQPQPPRISTPS, TGGSSSSGVSSRGSSTYNSR, and SAAG…ATNV. A compositionally biased stretch (low complexity) spans 171 to 188; sequence NGTNSNSDNNSTNTNSNN. 4 stretches are compositionally biased toward polar residues: residues 189 to 208, 248 to 279, 339 to 359, and 375 to 384; these read KPSHQDVSTNFFSTPSTNNY, FDLSSNPQNHTLSPSMAQNSGTTPSSSASQNP, GRSSGTFTVQNFGEGSSNQSP, and GQGQTNSRNI. A compositionally biased stretch (low complexity) spans 442–451; that stretch reads PPTNTQHQQQ. A compositionally biased stretch (low complexity) spans 720–739; sequence GTTSAVNGVSNGSGNNATNV.

Belongs to the ERT1/acuK family.

The protein localises to the nucleus. Its function is as follows. Transcription factor which regulates nonfermentable carbon utilization. Activator of gluconeogenetic genes. The chain is Transcription activator of gluconeogenesis PADG_03802 from Paracoccidioides brasiliensis (strain Pb18).